A 203-amino-acid chain; its full sequence is Small ribosomal subunit protein uS4 (203 aa).

Residues 20–44 (LPGLTRKRPKNTNPPGMHGAERKKK) form a disordered region. The 64-residue stretch at 92–155 (MRLDCIVFRL…SSRKLVAAYA (64 aa)) folds into the S4 RNA-binding domain.

Belongs to the universal ribosomal protein uS4 family. As to quaternary structure, part of the 30S ribosomal subunit. Contacts protein S5. The interaction surface between S4 and S5 is involved in control of translational fidelity.

Its function is as follows. One of the primary rRNA binding proteins, it binds directly to 16S rRNA where it nucleates assembly of the body of the 30S subunit. With S5 and S12 plays an important role in translational accuracy. The polypeptide is Small ribosomal subunit protein uS4 (Synechococcus sp. (strain JA-2-3B'a(2-13)) (Cyanobacteria bacterium Yellowstone B-Prime)).